A 336-amino-acid polypeptide reads, in one-letter code: MQDFKTHLEPLKEGKNLLGFSGGLDSTCLFFLLVGENIVFDIALVDYNTQKQRLEIIQHAQKLAKTHHKKCYIHHAPKIAHNFEMQARKIRYDFFETLIKEHSYKHLILAHHLNDRLEWFLMQLSKGAGLNTLLSFQAYEKRESYAIVRPLLYTPKDTLKTLAKDLKFFEDDSNSSLKFKRNCFRKNYANSLMQDYSKGIIQSFKFLDQEKERLYPLTIVSQMHGITFFKYSQNALFMVDKILKQKGYVLSFSQKEEIKRSFFSLEIAQKFIIESDKEHVFIALKPPKTLSMPKDFKDRARRLDIPKRLRPVLYAEFLKQPTHDFLTRFKQSLMDL.

Residue 21-26 coordinates ATP; sequence SGGLDS.

Belongs to the tRNA(Ile)-lysidine synthase family.

The protein localises to the cytoplasm. The catalysed reaction is cytidine(34) in tRNA(Ile2) + L-lysine + ATP = lysidine(34) in tRNA(Ile2) + AMP + diphosphate + H(+). In terms of biological role, ligates lysine onto the cytidine present at position 34 of the AUA codon-specific tRNA(Ile) that contains the anticodon CAU, in an ATP-dependent manner. Cytidine is converted to lysidine, thus changing the amino acid specificity of the tRNA from methionine to isoleucine. In Helicobacter pylori (strain ATCC 700392 / 26695) (Campylobacter pylori), this protein is tRNA(Ile)-lysidine synthase.